Reading from the N-terminus, the 94-residue chain is DASH complex subunit dad2 (94 aa).

A coiled-coil region spans residues 18–38 (KLRDSSNDMVQQIETLAAKLE). Positions 72–94 (VRIPPSTSNTNASATEQGDVEEV) are disordered. Positions 76 to 87 (PSTSNTNASATE) are enriched in polar residues.

This sequence belongs to the DASH complex DAD2 family. Component of the DASH complex consisting of ask1, dad1, dad2, dad3, dad4, dam1, duo1, dad5, spc19 and spc34, with a stoichiometry of one copy of each subunit per complex. Multiple DASH complexes oligomerize to form a ring that encircles spindle microtubules and organizes the rod-like NDC80 complexes of the outer kinetochore. DASH complex oligomerization strengthens microtubule attachments. On cytoplasmic microtubules, DASH complexes appear to form patches instead of rings.

The protein localises to the nucleus. It localises to the cytoplasm. It is found in the cytoskeleton. The protein resides in the spindle. Its subcellular location is the chromosome. The protein localises to the centromere. It localises to the kinetochore. Its function is as follows. Component of the DASH complex that connects microtubules with kinetochores and couples microtubule depolymerisation to chromosome movement; it is involved in retrieving kinetochores to the spindle poles before their re-orientation on the spindle in early mitosis and allows microtubule depolymerization to pull chromosomes apart and resist detachment during anaphase. Kinetochores, consisting of a centromere-associated inner segment and a microtubule-contacting outer segment, play a crucial role in chromosome segregation by mediating the physical connection between centromeric DNA and microtubules. Kinetochores also serve as an input point for the spindle assembly checkpoint, which delays anaphase until all chromosomes have bioriented on the mitotic spindle. The DASH complex mediates bipolar kinetochore-microtubule attachments and facilitates the formation of additional interactions between outer kinetochore components and spindle microtubules. During chromosome movement along the microtubule, it is required both for the sliding of kinetochores along the lateral side of the microtubule and also for microtubule end-on pulling on the kinetochore. Modulates cytoplasmic microtubule dynamics by tracking the plus-end of shortening microtubules and slowing their depolymerization. In Schizosaccharomyces pombe (strain 972 / ATCC 24843) (Fission yeast), this protein is DASH complex subunit dad2.